Here is a 428-residue protein sequence, read N- to C-terminus: Enolase 1 (428 aa).

A (2R)-2-phosphoglycerate-binding site is contributed by glutamine 167. The Proton donor role is filled by glutamate 209. Mg(2+) contacts are provided by aspartate 246, glutamate 288, and aspartate 315. Positions 340, 369, 370, and 391 each coordinate (2R)-2-phosphoglycerate. The active-site Proton acceptor is the lysine 340.

This sequence belongs to the enolase family. Component of the RNA degradosome, a multiprotein complex involved in RNA processing and mRNA degradation. Requires Mg(2+) as cofactor.

The protein localises to the cytoplasm. The protein resides in the secreted. Its subcellular location is the cell surface. The enzyme catalyses (2R)-2-phosphoglycerate = phosphoenolpyruvate + H2O. The protein operates within carbohydrate degradation; glycolysis; pyruvate from D-glyceraldehyde 3-phosphate: step 4/5. Its function is as follows. Catalyzes the reversible conversion of 2-phosphoglycerate (2-PG) into phosphoenolpyruvate (PEP). It is essential for the degradation of carbohydrates via glycolysis. This Pseudomonas syringae pv. syringae (strain B728a) protein is Enolase 1.